We begin with the raw amino-acid sequence, 357 residues long: Prostaglandin D2 receptor-like (357 aa).

Residues 1-20 (MNESYRCQAATWVERGSSAT) lie on the Extracellular side of the membrane. Asn2 is a glycosylation site (N-linked (GlcNAc...) asparagine). The chain crosses the membrane as a helical span at residues 21–41 (MGGVLFSAGLLGNLLALVLLA). Residues 42–57 (RSGLGSCRPGPLHPPP) are Cytoplasmic-facing. The helical transmembrane segment at 58–78 (SVFYVLVCGLTVTHLLGKCLI) threads the bilayer. Over 79–106 (SPMVLAAYAQNRSLKELLPASGNQLCEA) the chain is Extracellular. N-linked (GlcNAc...) asparagine glycosylation occurs at Asn89. Cys104 and Cys182 are disulfide-bonded. Residues 107 to 127 (FAFLMSFFGLASTLQLLAMAL) form a helical membrane-spanning segment. The Cytoplasmic segment spans residues 128–149 (ECWLSLGHPFFYQRHITARRGV). Residues 150 to 170 (LVAPVAGAFSLAFCALPFAGF) traverse the membrane as a helical segment. At 171–194 (GKFVQYCPGTWCFIQMIHKKRSFS) the chain is on the extracellular side. A helical transmembrane segment spans residues 195–215 (VIGFSVLYSSLMALLVLATVV). Over 216-261 (CNLGAMSNLYAMHRRQRHHPRRCSRDRAQSGSDYRHGSPNPLEELD) the chain is Cytoplasmic. A helical membrane pass occupies residues 262-282 (HFVLLALTTVLFTMCSLPLIY). The Extracellular segment spans residues 283–306 (RAYYGAFKLVDRADGDSEDLQALR). Residues 307–327 (FLSVISIVDPWIFIIFRTSVF) traverse the membrane as a helical segment. Residues 328–357 (RMLFHKAFTRPLIYRNWCSHSWQTNMESTL) lie on the Cytoplasmic side of the membrane.

The protein belongs to the G-protein coupled receptor 1 family. As to expression, strongly expressed in eye and gastrointestinal tract (GIT), moderately in the brain and oviduct and weakly in the epididymis. In the eye, expressed in the epithelium of the iris and ciliary body and in photoreceptor cells of the retina. In the brain, expressed in leptomeninges, choroid plexus and spinal cord (sensory and motor neurons of the dorsal and ventral horns). In the stomach, expressed in the mucous-secreting goblet cells and the columnar epithelium. Expressed in platelets.

Its subcellular location is the cell membrane. In terms of biological role, receptor for prostaglandin D2 (PGD2). The activity of this receptor is mainly mediated by G(s) proteins that stimulate adenylate cyclase, resulting in an elevation of intracellular cAMP. A mobilization of calcium is also observed, but without formation of inositol 1,4,5-trisphosphate. The polypeptide is Prostaglandin D2 receptor-like (Ptgdrl) (Rattus norvegicus (Rat)).